We begin with the raw amino-acid sequence, 738 residues long: Phosphoribosylformylglycinamidine synthase subunit PurL (738 aa).

H53 is a catalytic residue. The ATP site is built by Y56 and K95. A Mg(2+)-binding site is contributed by E97. Residues 98–101 and R120 contribute to the substrate site; that span reads SHNH. Catalysis depends on H99, which acts as the Proton acceptor. D121 contributes to the Mg(2+) binding site. A substrate-binding site is contributed by Q244. Mg(2+) is bound at residue D274. Residue 318–320 coordinates substrate; sequence ESQ. Positions 499 and 536 each coordinate ATP. N537 serves as a coordination point for Mg(2+). S539 lines the substrate pocket.

Belongs to the FGAMS family. As to quaternary structure, monomer. Part of the FGAM synthase complex composed of 1 PurL, 1 PurQ and 2 PurS subunits.

The protein resides in the cytoplasm. It carries out the reaction N(2)-formyl-N(1)-(5-phospho-beta-D-ribosyl)glycinamide + L-glutamine + ATP + H2O = 2-formamido-N(1)-(5-O-phospho-beta-D-ribosyl)acetamidine + L-glutamate + ADP + phosphate + H(+). The protein operates within purine metabolism; IMP biosynthesis via de novo pathway; 5-amino-1-(5-phospho-D-ribosyl)imidazole from N(2)-formyl-N(1)-(5-phospho-D-ribosyl)glycinamide: step 1/2. Functionally, part of the phosphoribosylformylglycinamidine synthase complex involved in the purines biosynthetic pathway. Catalyzes the ATP-dependent conversion of formylglycinamide ribonucleotide (FGAR) and glutamine to yield formylglycinamidine ribonucleotide (FGAM) and glutamate. The FGAM synthase complex is composed of three subunits. PurQ produces an ammonia molecule by converting glutamine to glutamate. PurL transfers the ammonia molecule to FGAR to form FGAM in an ATP-dependent manner. PurS interacts with PurQ and PurL and is thought to assist in the transfer of the ammonia molecule from PurQ to PurL. This is Phosphoribosylformylglycinamidine synthase subunit PurL from Lacticaseibacillus paracasei (strain ATCC 334 / BCRC 17002 / CCUG 31169 / CIP 107868 / KCTC 3260 / NRRL B-441) (Lactobacillus paracasei).